Consider the following 603-residue polypeptide: Elongation factor 4 (603 aa).

The tr-type G domain occupies 7 to 189; that stretch reads VRIRNFCIIA…AVVERIPPPP (183 aa). GTP-binding positions include 19–24 and 136–139; these read DHGKST and NKID.

The protein belongs to the TRAFAC class translation factor GTPase superfamily. Classic translation factor GTPase family. LepA subfamily.

The protein localises to the cell inner membrane. It carries out the reaction GTP + H2O = GDP + phosphate + H(+). Required for accurate and efficient protein synthesis under certain stress conditions. May act as a fidelity factor of the translation reaction, by catalyzing a one-codon backward translocation of tRNAs on improperly translocated ribosomes. Back-translocation proceeds from a post-translocation (POST) complex to a pre-translocation (PRE) complex, thus giving elongation factor G a second chance to translocate the tRNAs correctly. Binds to ribosomes in a GTP-dependent manner. The chain is Elongation factor 4 from Nostoc punctiforme (strain ATCC 29133 / PCC 73102).